A 476-amino-acid polypeptide reads, in one-letter code: NAC domain-containing protein 86 (476 aa).

The region spanning 6–157 (LPPGFRFHPT…AYALCRVFKK (152 aa)) is the NAC domain. The DNA-binding element occupies 105-163 (IGTKKTLVYYRGRAPHGIRTGWVMHEYRLDESECEPSAFGMQDAYALCRVFKKIVIEAK).

As to expression, expressed in a few sieve element cells before enucleation and in phloem-pole pericycle cells.

The protein resides in the nucleus. In terms of biological role, transcription factor directing sieve element enucleation and cytosol degradation. Not required for formation of lytic vacuoles. Regulates, with NAC045, the transcription of NEN1, NEN2, NEN3, NEN4, RTM1, RTM2, UBP16, PLDZETA, ABCB10 and At1g26450. The polypeptide is NAC domain-containing protein 86 (Arabidopsis thaliana (Mouse-ear cress)).